Here is a 144-residue protein sequence, read N- to C-terminus: Bombinins BLP-7/GH-2 (144 aa).

Residues 1–18 form the signal peptide; it reads MNFKYIVAVSFLIASTYA. Positions 19-43 are excised as a propeptide; sequence RSVKNDEQSLSQRDVLEEESLREIR. Asparagine amide is present on Asn-70. Residues 74–123 constitute a propeptide that is removed on maturation; sequence TAEEHEVMKRLEAVMRDLDSLDYPEEASEMETRSFNQEEIANLFTKKEKR. Ile-143 carries the post-translational modification Isoleucine amide.

This sequence belongs to the bombinin family. As to expression, expressed by the skin glands.

It localises to the secreted. Its function is as follows. Antimicrobial peptide with activity against Gram-positive and -negative bacteria and fungi. Shows activity against P.acnes (MIC=5 uM), E.coli (MIC=5-6.3 uM), S.aureus (MIC=5-6.3 uM), M.luteus, S.cerevisiae and C.albicans (MIC=10-12.5 uM). Also reduces the production of interleukin (IL)-8 and granulocyte-macrophage colony stimulating factor (CSF2) in normal human epidermal keratinocytes (NHEKs). Shows anticancer activity against three human hepatoma cell lines. In vivo, using the rat ear edema model, suppress P.acnes-induced skin inflammation, significantly reducing the ear thickness. Shows weak hemolytic activity against human erythrocytes. Shows weak antimicrobial activity but high hemolytic activity. In Bombina orientalis (Oriental fire-bellied toad), this protein is Bombinins BLP-7/GH-2.